A 238-amino-acid chain; its full sequence is Probable transcriptional regulatory protein SERP0322 (238 aa).

The protein belongs to the TACO1 family. YeeN subfamily.

Its subcellular location is the cytoplasm. This Staphylococcus epidermidis (strain ATCC 35984 / DSM 28319 / BCRC 17069 / CCUG 31568 / BM 3577 / RP62A) protein is Probable transcriptional regulatory protein SERP0322.